The sequence spans 637 residues: 1-deoxy-D-xylulose-5-phosphate synthase (637 aa).

Thiamine diphosphate-binding positions include histidine 72 and 113–115 (GHA). Aspartate 144 contributes to the Mg(2+) binding site. Thiamine diphosphate contacts are provided by residues 145–146 (GA), asparagine 174, tyrosine 287, and glutamate 370. Position 174 (asparagine 174) interacts with Mg(2+).

Belongs to the transketolase family. DXPS subfamily. In terms of assembly, homodimer. Mg(2+) serves as cofactor. The cofactor is thiamine diphosphate.

It carries out the reaction D-glyceraldehyde 3-phosphate + pyruvate + H(+) = 1-deoxy-D-xylulose 5-phosphate + CO2. It participates in metabolic intermediate biosynthesis; 1-deoxy-D-xylulose 5-phosphate biosynthesis; 1-deoxy-D-xylulose 5-phosphate from D-glyceraldehyde 3-phosphate and pyruvate: step 1/1. Catalyzes the acyloin condensation reaction between C atoms 2 and 3 of pyruvate and glyceraldehyde 3-phosphate to yield 1-deoxy-D-xylulose-5-phosphate (DXP). In Prochlorococcus marinus subsp. pastoris (strain CCMP1986 / NIES-2087 / MED4), this protein is 1-deoxy-D-xylulose-5-phosphate synthase.